A 276-amino-acid chain; its full sequence is Formamidopyrimidine-DNA glycosylase (276 aa).

Residue Pro2 is the Schiff-base intermediate with DNA of the active site. The active-site Proton donor is the Glu3. Residue Lys60 is the Proton donor; for beta-elimination activity of the active site. DNA-binding residues include His93 and Arg112. The FPG-type zinc-finger motif lies at 240–274; that stretch reads NVYGKKGEPCVTCGTILEKTVVGGRGTHYCPICQP. Residue Arg264 is the Proton donor; for delta-elimination activity of the active site.

It belongs to the FPG family. Monomer. Zn(2+) is required as a cofactor.

The enzyme catalyses Hydrolysis of DNA containing ring-opened 7-methylguanine residues, releasing 2,6-diamino-4-hydroxy-5-(N-methyl)formamidopyrimidine.. The catalysed reaction is 2'-deoxyribonucleotide-(2'-deoxyribose 5'-phosphate)-2'-deoxyribonucleotide-DNA = a 3'-end 2'-deoxyribonucleotide-(2,3-dehydro-2,3-deoxyribose 5'-phosphate)-DNA + a 5'-end 5'-phospho-2'-deoxyribonucleoside-DNA + H(+). Its function is as follows. Involved in base excision repair of DNA damaged by oxidation or by mutagenic agents. Acts as a DNA glycosylase that recognizes and removes damaged bases. Has a preference for oxidized purines, such as 7,8-dihydro-8-oxoguanine (8-oxoG). Has AP (apurinic/apyrimidinic) lyase activity and introduces nicks in the DNA strand. Cleaves the DNA backbone by beta-delta elimination to generate a single-strand break at the site of the removed base with both 3'- and 5'-phosphates. The protein is Formamidopyrimidine-DNA glycosylase of Bacillus anthracis.